The chain runs to 412 residues: Inositol polyphosphate-5-phosphatase A (412 aa).

C409 carries the S-farnesyl cysteine lipid modification. Positions 410–412 (VVQ) are cleaved as a propeptide — removed in mature form.

Belongs to the inositol 1,4,5-trisphosphate 5-phosphatase type I family. In terms of assembly, interacts with TASOR. Isoprenylation at Cys-409 is required for localization at the membrane. As to expression, expressed at high levels in cerebellar Purkinje cells (at protein level). Expressed in Sertoli cells of the testis.

Its subcellular location is the cell membrane. The protein resides in the cell projection. It is found in the dendrite. The enzyme catalyses 1D-myo-inositol 1,4,5-trisphosphate + H2O = 1D-myo-inositol 1,4-bisphosphate + phosphate. The catalysed reaction is 1D-myo-inositol 1,3,4,5-tetrakisphosphate + H2O = 1D-myo-inositol 1,3,4-trisphosphate + phosphate. Phosphatase that specifically hydrolyzes the 5-phosphate of inositol 1,4,5-trisphosphate to inositol 1,4-bisphosphate, and inositol 1,3,4,5-tetrasphosphate to inositol 1,3,4-trisphosphate. Plays a crucial role in the survival of cerebellar Purkinje cells. The protein is Inositol polyphosphate-5-phosphatase A (Inpp5a) of Mus musculus (Mouse).